A 328-amino-acid chain; its full sequence is uncharacterized protein (328 aa).

In terms of domain architecture, SIS spans 37–179 (LTERLLCHQG…AMTVLRCRKI (143 aa)). ATP is bound at residue 52-57 (GIGKSG). 2 consecutive CBS domains span residues 205 to 264 (LSPR…GGAI) and 273 to 328 (MTRK…AGLL).

Belongs to the SIS family. GutQ/KpsF subfamily.

This is an uncharacterized protein from Chlamydia muridarum (strain MoPn / Nigg).